The following is a 64-amino-acid chain: MAQEQTKRGGGGGEDDDLTGSTAAGQERREKLTDETDDLLDEIDDVLEENAEDFVRAYVQKGGQ.

Residues 1–37 (MAQEQTKRGGGGGEDDDLTGSTAAGQERREKLTDETD) form a disordered region. Positions 21–58 (STAAGQERREKLTDETDDLLDEIDDVLEENAEDFVRAY) are ARC ATPase binding. A coiled-coil region spans residues 23–52 (AAGQERREKLTDETDDLLDEIDDVLEENAE). At Q64 the chain carries Deamidated glutamine. Q64 participates in a covalent cross-link: Isoglutamyl lysine isopeptide (Gln-Lys) (interchain with K-? in acceptor proteins).

It belongs to the prokaryotic ubiquitin-like protein family. Strongly interacts with the proteasome-associated ATPase ARC through a hydrophobic interface; the interacting region of Pup lies in its C-terminal half. There is one Pup binding site per ARC hexamer ring. Is modified by deamidation of its C-terminal glutamine to glutamate by the deamidase Dop, a prerequisite to the subsequent pupylation process.

The protein operates within protein degradation; proteasomal Pup-dependent pathway. In terms of biological role, protein modifier that is covalently attached to lysine residues of substrate proteins, thereby targeting them for proteasomal degradation. The tagging system is termed pupylation. This Mycolicibacterium vanbaalenii (strain DSM 7251 / JCM 13017 / BCRC 16820 / KCTC 9966 / NRRL B-24157 / PYR-1) (Mycobacterium vanbaalenii) protein is Prokaryotic ubiquitin-like protein Pup.